The chain runs to 74 residues: MAGQYWRAAGITYLQYANICGTHVRNCLKEPFRAAAKNREGFISNTVMYQNGKESSTIILNSELLQKELLVKKN.

The protein belongs to the eukaryotic ATPase epsilon family. In terms of assembly, component of the ATP synthase complex composed at least of ATP5F1A/subunit alpha, ATP5F1B/subunit beta, ATP5MC1/subunit c (homooctomer), MT-ATP6/subunit a, MT-ATP8/subunit 8, ATP5ME/subunit e, ATP5MF/subunit f, ATP5MG/subunit g, ATP5MK/subunit k, ATP5MJ/subunit j, ATP5F1C/subunit gamma, ATP5F1D/subunit delta, ATP5F1E/subunit epsilon, ATP5PF/subunit F6, ATP5PB/subunit b, ATP5PD/subunit d, ATP5PO/subunit OSCP. ATP synthase complex consists of a soluble F(1) head domain (subunits alpha(3) and beta(3)) - the catalytic core - and a membrane F(0) domain - the membrane proton channel (subunits c, a, 8, e, f, g, k and j). These two domains are linked by a central stalk (subunits gamma, delta, and epsilon) rotating inside the F1 region and a stationary peripheral stalk (subunits F6, b, d, and OSCP).

Its subcellular location is the mitochondrion. The protein resides in the mitochondrion inner membrane. Its function is as follows. Subunit epsilon, of the mitochondrial membrane ATP synthase complex (F(1)F(0) ATP synthase or Complex V) that produces ATP from ADP in the presence of a proton gradient across the membrane which is generated by electron transport complexes of the respiratory chain. ATP synthase complex consist of a soluble F(1) head domain - the catalytic core - and a membrane F(1) domain - the membrane proton channel. These two domains are linked by a central stalk rotating inside the F(1) region and a stationary peripheral stalk. During catalysis, ATP synthesis in the catalytic domain of F(1) is coupled via a rotary mechanism of the central stalk subunits to proton translocation. In vivo, can only synthesize ATP although its ATP hydrolase activity can be activated artificially in vitro. May be essential for the assembly of F(1) and may play an important role in the incorporation of the hydrophobic subunit c into the F(1)-c oligomer rotor of the mitochondrial ATP synthase complex. The sequence is that of ATP synthase F(1) complex subunit epsilon, mitochondrial from Dictyostelium discoideum (Social amoeba).